A 250-amino-acid chain; its full sequence is 5-oxoprolinase subunit A (250 aa).

This sequence belongs to the LamB/PxpA family. Forms a complex composed of PxpA, PxpB and PxpC.

It carries out the reaction 5-oxo-L-proline + ATP + 2 H2O = L-glutamate + ADP + phosphate + H(+). Functionally, catalyzes the cleavage of 5-oxoproline to form L-glutamate coupled to the hydrolysis of ATP to ADP and inorganic phosphate. The protein is 5-oxoprolinase subunit A of Pseudomonas fluorescens (strain Pf0-1).